Reading from the N-terminus, the 434-residue chain is Adenylosuccinate synthetase (434 aa).

GTP-binding positions include Gly12–Lys18 and Gly40–Thr42. The Proton acceptor role is filled by Asp13. Mg(2+) contacts are provided by Asp13 and Gly40. IMP contacts are provided by residues Asp13–Lys16, Asn38–His41, Thr129, Arg143, Gln224, Thr239, and Arg303. Catalysis depends on His41, which acts as the Proton donor. Residue Ala299–Arg305 coordinates substrate. GTP-binding positions include Arg305, Lys331 to Asp333, and Ser413 to Gly415.

This sequence belongs to the adenylosuccinate synthetase family. In terms of assembly, homodimer. The cofactor is Mg(2+).

It is found in the cytoplasm. The enzyme catalyses IMP + L-aspartate + GTP = N(6)-(1,2-dicarboxyethyl)-AMP + GDP + phosphate + 2 H(+). It functions in the pathway purine metabolism; AMP biosynthesis via de novo pathway; AMP from IMP: step 1/2. In terms of biological role, plays an important role in the de novo pathway of purine nucleotide biosynthesis. Catalyzes the first committed step in the biosynthesis of AMP from IMP. This chain is Adenylosuccinate synthetase, found in Solibacter usitatus (strain Ellin6076).